An 800-amino-acid polypeptide reads, in one-letter code: DNA topoisomerase 4 subunit A (800 aa).

The 465-residue stretch at 31-495 (LPDVRDGLKP…EIEEIKIDKE (465 aa)) folds into the Topo IIA-type catalytic domain. Tyrosine 119 acts as the O-(5'-phospho-DNA)-tyrosine intermediate in catalysis.

The protein belongs to the type II topoisomerase GyrA/ParC subunit family. ParC type 2 subfamily. As to quaternary structure, heterotetramer composed of ParC and ParE.

The protein localises to the cell membrane. It carries out the reaction ATP-dependent breakage, passage and rejoining of double-stranded DNA.. Its function is as follows. Topoisomerase IV is essential for chromosome segregation. It relaxes supercoiled DNA. Performs the decatenation events required during the replication of a circular DNA molecule. This Staphylococcus aureus (strain NCTC 8325 / PS 47) protein is DNA topoisomerase 4 subunit A.